We begin with the raw amino-acid sequence, 209 residues long: Small ribosomal subunit protein uS5 (209 aa).

In terms of domain architecture, S5 DRBM spans 48–111 (LEDEVLDINM…DAAKLNITYI (64 aa)).

Belongs to the universal ribosomal protein uS5 family. In terms of assembly, part of the 30S ribosomal subunit. Contacts protein S4.

Its function is as follows. With S4 and S12 plays an important role in translational accuracy. The chain is Small ribosomal subunit protein uS5 from Methanosarcina acetivorans (strain ATCC 35395 / DSM 2834 / JCM 12185 / C2A).